The sequence spans 1823 residues: AF4/FMR2 family member lilli (1823 aa).

The span at 1-41 (MAQQQQQQHQQQQHHQQQQQQLQQQQQLLQYNNNSYNLNYN) shows a compositional bias: low complexity. Disordered regions lie at residues 1-87 (MAQQ…DPEI), 126-305 (GFGS…ENHI), 422-544 (QQLT…KKKY), 570-626 (AGPG…WHLS), 686-712 (DSRH…YGVG), 753-1057 (PKNQ…DIPT), 1071-1287 (AAAQ…LKPR), 1322-1350 (ARQH…GART), 1413-1448 (FMLK…AEQL), 1480-1531 (ENSA…AIAS), 1547-1567 (TCSE…APRL), and 1715-1744 (GNTP…IVPQ). A compositionally biased stretch (basic and acidic residues) spans 53–79 (REKYERQQGIQSDDRETSLFGEPRRLN). 3 stretches are compositionally biased toward low complexity: residues 126–147 (GFGS…SSAS), 156–174 (QQQQ…QQQQ), and 205–249 (PSSS…TSSP). Pro residues predominate over residues 426 to 438 (PTPPKASPTPPVI). Thr-434 bears the Phosphothreonine mark. The span at 441 to 454 (LKTEKNHSLEKQDS) shows a compositional bias: basic and acidic residues. Over residues 456 to 466 (LENDLELSESD) the composition is skewed to acidic residues. 2 positions are modified to phosphoserine: Ser-463 and Ser-465. A compositionally biased stretch (low complexity) spans 475-531 (SAGNSSNSSESDSSESGSEASSKGDPQQQQQQQQQHLLHQQQQHQQQQLLLQQQQQQ). Over residues 582 to 598 (AAGGVGSGSGSTGGGSS) the composition is skewed to gly residues. The segment covering 599–612 (SSGMGTMSSSNSSN) has biased composition (low complexity). Residues 764–785 (SDSGSGSSGSGSSSSDSAGGSS) show a composition bias toward low complexity. Residues 818-827 (HKAQPNSVTL) are compositionally biased toward polar residues. The span at 839–849 (PRQKKPRKKKM) shows a compositional bias: basic residues. Phosphoserine is present on residues Ser-859 and Ser-860. 5 stretches are compositionally biased toward low complexity: residues 877–906 (AATA…AAPA), 917–947 (QAQQ…SSQA), 962–979 (GTAS…VAAG), 1002–1057 (AAMA…DIPT), and 1102–1161 (NSSN…QLLQ). Residues 908–920 (KKGRGRPRKQAQQ) constitute a DNA-binding region (a.T hook). Residues Ser-939 and Ser-941 each carry the phosphoserine modification. Over residues 1172 to 1181 (TLKQSAQQRL) the composition is skewed to polar residues. Low complexity-rich tracts occupy residues 1182 to 1203 (SSSD…ASSS) and 1253 to 1280 (QQQQ…QQQQ). The segment covering 1334–1344 (TQQNGHLSSRS) has biased composition (polar residues). The span at 1480 to 1496 (ENSANASPNKLQQQNAR) shows a compositional bias: polar residues. Ser-1486 bears the Phosphoserine mark. The segment covering 1497-1531 (QLPLSQSQLQHQHQHQHQLQQQQSQSTATGHAIAS) has biased composition (low complexity). Positions 1555-1565 (TPPPAAPPPAP) are enriched in pro residues. Low complexity predominate over residues 1715-1735 (GNTPSSISPSNSVGSQGSGSN).

It belongs to the AF4 family.

It localises to the nucleus. Its function is as follows. Has a role in transcriptional regulation. Acts in parallel with the Ras/MAPK and the PI3K/PKB pathways in the control of cell identity and cellular growth. Essential for regulation of the cytoskeleton and cell growth but not for cell proliferation or growth rate. Required specifically for the microtubule-based basal transport of lipid droplets. Plays a partially redundant function downstream of Raf in cell fate specification in the developing eye. Pair-rule protein that regulates embryonic cellularization, gastrulation and segmentation. The sequence is that of AF4/FMR2 family member lilli from Drosophila virilis (Fruit fly).